We begin with the raw amino-acid sequence, 582 residues long: Frizzled-10 (582 aa).

The first 21 residues, 1 to 21, serve as a signal peptide directing secretion; it reads MQHPGPRLWLVLQVMIGSCTA. Over 22–226 the chain is Extracellular; that stretch reads ISSMDLERPG…DVYWSRDDKR (205 aa). The 122-residue stretch at 30–151 folds into the FZ domain; sequence PGDGKCQPVE…NDPNYLCMEA (122 aa). Intrachain disulfides connect Cys-35-Cys-96, Cys-43-Cys-89, Cys-80-Cys-118, Cys-107-Cys-148, and Cys-111-Cys-135. Asn-49 is a glycosylation site (N-linked (GlcNAc...) asparagine). A disordered region spans residues 153 to 189; sequence NNGSDEPSRGSGMFPPLFRPQRPHSAQEHPLKDGGPG. N-linked (GlcNAc...) asparagine glycosylation is present at Asn-154. A helical membrane pass occupies residues 227–247; that stretch reads FAVVWLAIWSVLCFFSSAFTV. Topologically, residues 248-263 are cytoplasmic; that stretch reads LTFLIDPSRFRYPERP. The helical transmembrane segment at 264 to 284 threads the bilayer; sequence IIFLSMCYCVYSVGYIIRLFA. Residues 285-312 are Extracellular-facing; that stretch reads GAESIACDRDSGQLYVIQEGLESTGCTL. The chain crosses the membrane as a helical span at residues 313–333; it reads VFLVLYYFGMASSLWWVVLTL. Over 334 to 352 the chain is Cytoplasmic; the sequence is TWFLAAGKKWGHEAIEANS. The helical transmembrane segment at 353 to 373 threads the bilayer; that stretch reads SYFHLAAWAIPAVKTILILVM. Topologically, residues 374-394 are extracellular; sequence RRVAGDELTGVCYVGSMDVNA. A helical transmembrane segment spans residues 395 to 415; that stretch reads LTGFVLVPLACYLVIGTSFIL. Residues 416–444 are Cytoplasmic-facing; the sequence is SGFVALFHIRRVMKTGGENTDKLEKLMVR. Residues 445–465 traverse the membrane as a helical segment; sequence IGVFSLLYTVPATCVIACYFY. The Extracellular segment spans residues 466 to 503; the sequence is ERLNMDYWKMLATQHKCKMNNQTKTPDCLMTTSIPAVE. An N-linked (GlcNAc...) asparagine glycan is attached at Asn-486. Residues 504–524 form a helical membrane-spanning segment; it reads VFMVKVSMLLVVGITSGVWVW. Residues 525-582 lie on the Cytoplasmic side of the membrane; that stretch reads TSKTLQSWQHVCSRGLKRKSRRKPASVVTSAGIYKKAQHPQKPHLGKYELPAQPSACV. Positions 527 to 532 match the Lys-Thr-X-X-X-Trp motif, mediates interaction with the PDZ domain of Dvl family members motif; that stretch reads KTLQSW. The interval 561 to 582 is disordered; the sequence is AQHPQKPHLGKYELPAQPSACV. The short motif at 580-582 is the PDZ-binding element; sequence ACV.

Belongs to the G-protein coupled receptor Fz/Smo family. In terms of assembly, interacts with MYOC. Interacts with WNT7B. Ubiquitinated by ZNRF3, leading to its degradation by the proteasome.

The protein resides in the cell membrane. Its function is as follows. Receptor for Wnt proteins. Functions in the canonical Wnt/beta-catenin signaling pathway. The canonical Wnt/beta-catenin signaling pathway leads to the activation of disheveled proteins, inhibition of GSK-3 kinase, nuclear accumulation of beta-catenin and activation of Wnt target genes. A second signaling pathway involving PKC and calcium fluxes has been seen for some family members, but it is not yet clear if it represents a distinct pathway or if it can be integrated in the canonical pathway, as PKC seems to be required for Wnt-mediated inactivation of GSK-3 kinase. Both pathways seem to involve interactions with G-proteins. May be involved in transduction and intercellular transmission of polarity information during tissue morphogenesis and/or in differentiated tissues. The chain is Frizzled-10 (Fzd10) from Mus musculus (Mouse).